The primary structure comprises 335 residues: Methionine import ATP-binding protein MetN (335 aa).

In terms of domain architecture, ABC transporter spans 2 to 241 (IEFQRLHKSY…PKHVTTRRFV (240 aa)). 38–45 (GHSGAGKS) is a binding site for ATP.

The protein belongs to the ABC transporter superfamily. Methionine importer (TC 3.A.1.24) family. The complex is composed of two ATP-binding proteins (MetN), two transmembrane proteins (MetI) and a solute-binding protein (MetQ).

It localises to the cell inner membrane. The enzyme catalyses L-methionine(out) + ATP + H2O = L-methionine(in) + ADP + phosphate + H(+). It carries out the reaction D-methionine(out) + ATP + H2O = D-methionine(in) + ADP + phosphate + H(+). Its function is as follows. Part of the ABC transporter complex MetNIQ involved in methionine import. Responsible for energy coupling to the transport system. The polypeptide is Methionine import ATP-binding protein MetN (Xanthomonas oryzae pv. oryzae (strain KACC10331 / KXO85)).